Reading from the N-terminus, the 407-residue chain is Phosphopentomutase (407 aa).

6 residues coordinate Mn(2+): aspartate 10, aspartate 306, histidine 311, aspartate 347, histidine 348, and histidine 359.

The protein belongs to the phosphopentomutase family. Requires Mn(2+) as cofactor.

It is found in the cytoplasm. The enzyme catalyses 2-deoxy-alpha-D-ribose 1-phosphate = 2-deoxy-D-ribose 5-phosphate. It carries out the reaction alpha-D-ribose 1-phosphate = D-ribose 5-phosphate. It functions in the pathway carbohydrate degradation; 2-deoxy-D-ribose 1-phosphate degradation; D-glyceraldehyde 3-phosphate and acetaldehyde from 2-deoxy-alpha-D-ribose 1-phosphate: step 1/2. Its function is as follows. Isomerase that catalyzes the conversion of deoxy-ribose 1-phosphate (dRib-1-P) and ribose 1-phosphate (Rib-1-P) to deoxy-ribose 5-phosphate (dRib-5-P) and ribose 5-phosphate (Rib-5-P), respectively. In Escherichia coli (strain UTI89 / UPEC), this protein is Phosphopentomutase.